The chain runs to 212 residues: Golgi SNAP receptor complex member 2 homolog memb-1 (212 aa).

Residues 1–189 (MEAQYQSTNF…QVIDRRVRED (189 aa)) lie on the Cytoplasmic side of the membrane. Residues 190–210 (WIFVIGCIVCCIFMYAFYRFW) traverse the membrane as a helical; Anchor for type IV membrane protein segment. Topologically, residues 211 to 212 (RG) are vesicular.

Belongs to the GOSR2 family. As to quaternary structure, part of a unique SNARE complex.

It localises to the golgi apparatus. The protein resides in the cis-Golgi network membrane. It is found in the golgi apparatus membrane. Its subcellular location is the endoplasmic reticulum membrane. Involved in transport of proteins from the cis/medial-Golgi to the trans-Golgi network. The chain is Golgi SNAP receptor complex member 2 homolog memb-1 from Caenorhabditis briggsae.